The sequence spans 714 residues: A-kinase anchor protein 5 (714 aa).

Disordered stretches follow at residues 1-146 (METS…GYVR) and 243-333 (VLEN…VGHT). The segment at 1-164 (METSVSEIQI…EIKAQIQPDE (164 aa)) is essential to the intracellular anchoring function. Residues Ser4 and Ser22 each carry the phosphoserine modification. The span at 10–32 (IETKDEKRPEAASPQKERQERKT) shows a compositional bias: basic and acidic residues. Cys36 is lipidated: S-palmitoyl cysteine. Residues 37–50 (FKRRKKVNKKKAKA) are compositionally biased toward basic residues. 2 stretches are compositionally biased toward basic and acidic residues: residues 54–63 (TAEETEKHAP) and 88–100 (KPSESAEKQKPSE). Residues 74-94 (AGAWASIKRLVTHRKPSESAE) carry the AKAP CaM-binding motif. Residue Cys123 is the site of S-palmitoyl cysteine attachment. Residues 243–268 (VLENSAADSPQPVTSTAPLSPATTHQ) show a composition bias toward polar residues. Residues 285–301 (GKDDGRRKTAAEEKKSG) are compositionally biased toward basic and acidic residues. One copy of the 1; approximate repeat lies at 305-312 (LGQAEEAS). The tract at residues 305–597 (LGQAEEASSV…PIVGQAEETV (293 aa)) is 28 X 8 AA repeats of V-G-Q-A-E-E-A-T. The span at 310–323 (EASSVSQADKSVLS) shows a compositional bias: polar residues. Residues 322 to 329 (LSQAEEAT) form a 2; approximate repeat. A 3; approximate repeat occupies 330–337 (VGHTEEAT). A 4; approximate repeat occupies 350 to 357 (LSQAEEAT). One copy of the 5; approximate repeat lies at 358 to 365 (VAQAKETV). The 6; approximate repeat unit spans residues 366–373 (LSQAEEVK). One copy of the 7; approximate repeat lies at 398–405 (VSQAEEAI). An 8; approximate repeat occupies 414–421 (MGQAEEAT). 5 consecutive repeat copies span residues 430–437 (VGQAEEAT), 438–445 (VGQAEEAT), 446–453 (VGQAEEAT), 454–461 (VGQAEEAT), and 462–469 (VGQAEEAT). The 14; approximate repeat unit spans residues 470–477 (VGQAGEAT). The 15; approximate repeat unit spans residues 486 to 493 (VGQAEEAI). 4 repeat units span residues 494–501 (VGQAEEAT), 502–509 (VGQAEEAT), 510–517 (VGQAEEAT), and 518–525 (VGQAEEAT). The 20; approximate repeat unit spans residues 526–533 (VDQAEEAT). Copy 21 of the repeat occupies 534–541 (VGQAEEAT). The stretch at 542 to 549 (VGQAGEAA) is one 22; approximate repeat. Residues 550–557 (VGQAEEAI) form a 23; approximate repeat. A 24; approximate repeat occupies 558–565 (VAQAEEAT). Repeat unit 25 spans residues 566 to 573 (VGQAGEAT). The stretch at 574-581 (VGQAEKAT) is one 26; approximate repeat. One copy of the 27; approximate repeat lies at 582 to 589 (VGQAEEPI). The stretch at 590 to 597 (VGQAEETV) is one 28; approximate repeat. The segment at 675–696 (YETLLIETASSLVKNAIELSVE) is RII-beta subunit binding domain. The segment at 697–714 (QLVNEMVSEDNQINTLFQ) is tethers NFATC2 to CRAC channels.

In terms of assembly, binding protein for dimer of the RII-beta regulatory subunit of cAMP-dependent protein kinase (PKA) and also for the protein kinase C (PKC) and the phosphatase calcineurin (PP2B). Each enzyme is inhibited when bound to the anchoring protein. Also binds the beta2-adrenergic receptor. Part of a complex containing AKAP5, ADCY5, ADCY6 and PDE4C. Interacts with ADCY8, and enhances its phosphorylation at lipid rafts. Interacts with ORAI1 (isoform alpha) (via N-terminus) upon store depletion and in response to LTC4. Does not interact with ORAI2 and ORAI3 paralogs. Interacts (via leucine zipper domain) with NFATC2/NFAT1. Interacts with calmodulin; the interaction is calcium-independent. Interacts with KCNQ2; the interaction may help KCNQ2 channel complex to retain calcium-bound calmodulin. Interacts with KCNK2; the channel is recruited to postsynaptic microdomains by AKAP5 where it can integrate neurotransmitter receptor signals. Part of a complex composed of AKAP5 and ADRB2. Palmitoylated. Palmitoylation at Cys-36 and Cys-123 plays a key role in the targeting of AKAP5 to lipid rafts. Palmitoylation by ZDHHC2 is required for AKAP5 function in LTP-stimulated recycling endosome exocytosis.

The protein localises to the postsynaptic recycling endosome membrane. It is found in the cell projection. The protein resides in the dendrite. It localises to the postsynaptic cell membrane. In terms of biological role, multivalent scaffold protein that anchors the cAMP-dependent protein kinase/PKA to cytoskeletal and/or organelle-associated proteins, targeting the signal carried by cAMP to specific intracellular effectors. Association with the beta2-adrenergic receptor (beta2-AR) not only regulates beta2-AR signaling pathway, but also the activation by PKA by switching off the beta2-AR signaling cascade. Plays a role in long term synaptic potentiation by regulating protein trafficking from the dendritic recycling endosomes to the plasma membrane and controlling both structural and functional plasticity at excitatory synapses. In hippocampal pyramidal neurons, recruits KCNK2/TREK-1 channel at postsynaptic dense bodies microdomains and converts it to a leak channel no longer sensitive to stimulation by arachidonic acid, acidic pH or mechanical stress, nor inhibited by Gq-coupled receptors but still under the negative control of Gs-coupled receptors. Associates with ORAI1 pore-forming subunit of CRAC channels in Ca(2+) signaling microdomains where it recruits NFATC2/NFAT1 and couples store-operated Ca(2+) influx to calmodulin and calcineurin signaling and activation of NFAT-dependent transcriptional responses. The sequence is that of A-kinase anchor protein 5 (Akap5) from Rattus norvegicus (Rat).